The primary structure comprises 259 residues: HTH-type transcriptional regulator TtgV (259 aa).

The 63-residue stretch at 14 to 76 (IQVIARAASI…GPAGGFRLGP (63 aa)) folds into the HTH iclR-type domain. The segment at residues 36 to 59 (LAAIAQLVGLPRSTVQRIINALEE) is a DNA-binding region (H-T-H motif). Residues 89-253 (ILSLVKPYLR…KLNIERAIGR (165 aa)) enclose the IclR-ED domain.

Represses the expression of the ttgGHI and ttgVW operons. Binds to the ttgGHI / ttgVW intergenic region, probably preventing binding of RNA polymerase; ttgV dissociates from this region in the presence of 1-hexanol. This is HTH-type transcriptional regulator TtgV (ttgV) from Pseudomonas putida (strain DOT-T1E).